The following is a 753-amino-acid chain: 5-methyltetrahydropteroyltriglutamate--homocysteine methyltransferase (753 aa).

Residues 17–20 and lysine 117 contribute to the 5-methyltetrahydropteroyltri-L-glutamate site; that span reads RELK. L-homocysteine is bound by residues 431–433 and glutamate 484; that span reads IGS. Residues 431-433 and glutamate 484 each bind L-methionine; that span reads IGS. Residues 515 to 516 and tryptophan 561 each bind 5-methyltetrahydropteroyltri-L-glutamate; that span reads RC. L-homocysteine is bound at residue aspartate 599. Aspartate 599 lines the L-methionine pocket. A 5-methyltetrahydropteroyltri-L-glutamate-binding site is contributed by glutamate 605. The Zn(2+) site is built by histidine 641, cysteine 643, and glutamate 665. Histidine 694 acts as the Proton donor in catalysis. Cysteine 726 provides a ligand contact to Zn(2+).

It belongs to the vitamin-B12 independent methionine synthase family. Zn(2+) is required as a cofactor.

It carries out the reaction 5-methyltetrahydropteroyltri-L-glutamate + L-homocysteine = tetrahydropteroyltri-L-glutamate + L-methionine. The protein operates within amino-acid biosynthesis; L-methionine biosynthesis via de novo pathway; L-methionine from L-homocysteine (MetE route): step 1/1. Its function is as follows. Catalyzes the transfer of a methyl group from 5-methyltetrahydrofolate to homocysteine resulting in methionine formation. The protein is 5-methyltetrahydropteroyltriglutamate--homocysteine methyltransferase of Escherichia coli O157:H7 (strain EC4115 / EHEC).